A 231-amino-acid polypeptide reads, in one-letter code: Large ribosomal subunit protein uL1 (231 aa).

The protein belongs to the universal ribosomal protein uL1 family. As to quaternary structure, part of the 50S ribosomal subunit.

Binds directly to 23S rRNA. The L1 stalk is quite mobile in the ribosome, and is involved in E site tRNA release. In terms of biological role, protein L1 is also a translational repressor protein, it controls the translation of the L11 operon by binding to its mRNA. In Buchnera aphidicola subsp. Acyrthosiphon pisum (strain APS) (Acyrthosiphon pisum symbiotic bacterium), this protein is Large ribosomal subunit protein uL1.